The chain runs to 295 residues: Cyclic dipyrimidine nucleotide synthase CdnE (295 aa).

Residues 1-28 (MAKYTEDQLTSWTKPPSDSEQTKLENSE) are disordered. Residues 7–19 (DQLTSWTKPPSDS) are compositionally biased toward polar residues. Positions 51 and 53 each coordinate UTP. D67 serves as a coordination point for Mg(2+). Residues K123, N169, R197, F217, and K276 each contribute to the UTP site. Residues 275 to 277 (RKW) carry the Pyrimidine specificity motif (R/Q)xW in donor pocket motif.

The protein belongs to the CD-NTase family. E02 subfamily. As to quaternary structure, monomer. The cofactor is Mg(2+).

It carries out the reaction 2 UTP = c-di-UMP + 2 diphosphate. The enzyme catalyses UTP + CTP = cyclic CMP-UMP + 2 diphosphate. Functionally, cyclic nucleotide synthase (second messenger synthase) of a CBASS antivirus system. CBASS (cyclic oligonucleotide-based antiphage signaling system) provides immunity against bacteriophage. The CD-NTase protein synthesizes cyclic nucleotides in response to infection; these serve as specific second messenger signals. The signals activate a diverse range of effectors, leading to bacterial cell death and thus abortive phage infection. A type I-B(UU) CBASS system. This Cecembia lonarensis (strain CCUG 58316 / KCTC 22772 / LW9) protein is Cyclic dipyrimidine nucleotide synthase CdnE.